The following is a 376-amino-acid chain: Thymidine kinase (376 aa).

Residues 1–44 (MASYPGHQHASAFDQAARSRGHSNRRTALRPRRQQEATEVRPEQ) are disordered. The span at 19–32 (SRGHSNRRTALRPR) shows a compositional bias: basic residues. The span at 33–44 (RQQEATEVRPEQ) shows a compositional bias: basic and acidic residues. 56 to 63 (GPHGMGKT) serves as a coordination point for ATP. Residue E83 is the Proton acceptor of the active site. Positions 101 and 125 each coordinate substrate. Residue R216 coordinates ATP. R222 is a binding site for substrate. Residues 260–280 (GQLSGTAVPPQGAEPQSNAGP) form a disordered region.

It belongs to the herpesviridae thymidine kinase family. As to quaternary structure, homodimer.

The catalysed reaction is thymidine + ATP = dTMP + ADP + H(+). In terms of biological role, catalyzes the transfer of the gamma-phospho group of ATP to thymidine to generate dTMP in the salvage pathway of pyrimidine synthesis. The dTMP serves as a substrate for DNA polymerase during viral DNA replication. Allows the virus to be reactivated and to grow in non-proliferative cells lacking a high concentration of phosphorylated nucleic acid precursors. This is Thymidine kinase from Human herpesvirus 1 (strain SC16) (HHV-1).